We begin with the raw amino-acid sequence, 426 residues long: Bifunctional protein GlmU (426 aa).

Residues 1–216 (MSEVDVVILA…WHDILGVNTQ (216 aa)) are pyrophosphorylase. Residues 9–12 (LAAG), Lys23, and Gln69 contribute to the UDP-N-acetyl-alpha-D-glucosamine site. Asp97 contacts Mg(2+). Residues Gly132, Glu148, Asn163, and Asn214 each coordinate UDP-N-acetyl-alpha-D-glucosamine. Asn214 is a binding site for Mg(2+). Residues 217–237 (QQLAAVSKIARKRINDQIMAN) form a linker region. An N-acetyltransferase region spans residues 238–426 (GVTMIDPLTT…AKHDQRDDQP (189 aa)). Arg286 and Lys304 together coordinate UDP-N-acetyl-alpha-D-glucosamine. His316 functions as the Proton acceptor in the catalytic mechanism. Residues Tyr319 and Asn330 each coordinate UDP-N-acetyl-alpha-D-glucosamine. Acetyl-CoA is bound by residues Ala333, 339-340 (NY), Ser358, Ala376, and Arg393.

This sequence in the N-terminal section; belongs to the N-acetylglucosamine-1-phosphate uridyltransferase family. In the C-terminal section; belongs to the transferase hexapeptide repeat family. In terms of assembly, homotrimer. Mg(2+) serves as cofactor.

It is found in the cytoplasm. The enzyme catalyses alpha-D-glucosamine 1-phosphate + acetyl-CoA = N-acetyl-alpha-D-glucosamine 1-phosphate + CoA + H(+). It catalyses the reaction N-acetyl-alpha-D-glucosamine 1-phosphate + UTP + H(+) = UDP-N-acetyl-alpha-D-glucosamine + diphosphate. The protein operates within nucleotide-sugar biosynthesis; UDP-N-acetyl-alpha-D-glucosamine biosynthesis; N-acetyl-alpha-D-glucosamine 1-phosphate from alpha-D-glucosamine 6-phosphate (route II): step 2/2. It participates in nucleotide-sugar biosynthesis; UDP-N-acetyl-alpha-D-glucosamine biosynthesis; UDP-N-acetyl-alpha-D-glucosamine from N-acetyl-alpha-D-glucosamine 1-phosphate: step 1/1. It functions in the pathway bacterial outer membrane biogenesis; LPS lipid A biosynthesis. Catalyzes the last two sequential reactions in the de novo biosynthetic pathway for UDP-N-acetylglucosamine (UDP-GlcNAc). The C-terminal domain catalyzes the transfer of acetyl group from acetyl coenzyme A to glucosamine-1-phosphate (GlcN-1-P) to produce N-acetylglucosamine-1-phosphate (GlcNAc-1-P), which is converted into UDP-GlcNAc by the transfer of uridine 5-monophosphate (from uridine 5-triphosphate), a reaction catalyzed by the N-terminal domain. The chain is Bifunctional protein GlmU from Oenococcus oeni (strain ATCC BAA-331 / PSU-1).